The primary structure comprises 267 residues: MKKFTVLTLFPEMFNNFMTTSIIKKALYEKLIAIKIINIRDYSIGKHYQVDDYQYGGGEGMVLMIEPLVAAIKAQQTRDSVTILLTPQGKQYVQEQVQQFAANDNDLILVCGHYEGFDERILYYIDYELSIGDYILTGGELASMVVIDSVTRLCENVINTQSHLNDSFSKNLLDYPVYTKPVEYGGHYVPEVLLSGHHQKIAQWREYEALKKTWLKRPYLLEKKILTTEQQIFLEKIKNEKSFNDRRKEKNSYEDEFNRRNYKRSTS.

Residues Gly-112 and Ile-131–Leu-136 each bind S-adenosyl-L-methionine. Basic and acidic residues predominate over residues Asp-245 to Arg-259. Residues Asp-245 to Ser-267 form a disordered region.

This sequence belongs to the RNA methyltransferase TrmD family. In terms of assembly, homodimer.

It is found in the cytoplasm. It carries out the reaction guanosine(37) in tRNA + S-adenosyl-L-methionine = N(1)-methylguanosine(37) in tRNA + S-adenosyl-L-homocysteine + H(+). In terms of biological role, specifically methylates guanosine-37 in various tRNAs. The polypeptide is tRNA (guanine-N(1)-)-methyltransferase (Spiroplasma kunkelii).